The chain runs to 93 residues: Toxin RelE1 (93 aa).

This sequence belongs to the RelE toxin family.

Its function is as follows. Toxic component of a type II toxin-antitoxin (TA) system. Its toxic effect is neutralized by coexpression with cognate antitoxin RelB1 but no other ParD or RelB antitoxin. This Caulobacter vibrioides (strain ATCC 19089 / CIP 103742 / CB 15) (Caulobacter crescentus) protein is Toxin RelE1 (relE1).